The following is a 98-amino-acid chain: Aspartyl/glutamyl-tRNA(Asn/Gln) amidotransferase subunit C (98 aa).

Belongs to the GatC family. Heterotrimer of A, B and C subunits.

It carries out the reaction L-glutamyl-tRNA(Gln) + L-glutamine + ATP + H2O = L-glutaminyl-tRNA(Gln) + L-glutamate + ADP + phosphate + H(+). It catalyses the reaction L-aspartyl-tRNA(Asn) + L-glutamine + ATP + H2O = L-asparaginyl-tRNA(Asn) + L-glutamate + ADP + phosphate + 2 H(+). Its function is as follows. Allows the formation of correctly charged Asn-tRNA(Asn) or Gln-tRNA(Gln) through the transamidation of misacylated Asp-tRNA(Asn) or Glu-tRNA(Gln) in organisms which lack either or both of asparaginyl-tRNA or glutaminyl-tRNA synthetases. The reaction takes place in the presence of glutamine and ATP through an activated phospho-Asp-tRNA(Asn) or phospho-Glu-tRNA(Gln). This is Aspartyl/glutamyl-tRNA(Asn/Gln) amidotransferase subunit C from Kocuria rhizophila (strain ATCC 9341 / DSM 348 / NBRC 103217 / DC2201).